Reading from the N-terminus, the 357-residue chain is GDP-polyphosphate phosphotransferase (357 aa).

Positions 1–83 are disordered; that stretch reads MSEEPTVSPP…DSTSASLPAN (83 aa). Low complexity predominate over residues 14–25; that stretch reads QPAAQPAKPARP. Over residues 26-40 the composition is skewed to basic residues; sequence AARRAPRKPATRRPR.

This sequence belongs to the polyphosphate kinase 2 (PPK2) family. Class I subfamily. As to quaternary structure, homotetramer. Also forms octamers. Mg(2+) is required as a cofactor. It depends on Mn(2+) as a cofactor.

It catalyses the reaction [phosphate](n) + GTP = [phosphate](n+1) + GDP. It carries out the reaction [phosphate](n) + ATP = [phosphate](n+1) + ADP. Uses inorganic polyphosphate (polyP) as a donor to convert GDP to GTP and ADP to ATP. Shows a preference for GDP. Can also catalyze the synthesis of polyP from GTP or ATP, but the rate of polyP utilization is 75-fold greater than the rate of polyP synthesis. The protein is GDP-polyphosphate phosphotransferase of Pseudomonas aeruginosa (strain ATCC 15692 / DSM 22644 / CIP 104116 / JCM 14847 / LMG 12228 / 1C / PRS 101 / PAO1).